The sequence spans 356 residues: Protein pelota homolog (356 aa).

This sequence belongs to the eukaryotic release factor 1 family. Pelota subfamily. Monomer. The cofactor is a divalent metal cation.

Its subcellular location is the cytoplasm. In terms of biological role, may function in recognizing stalled ribosomes, interact with stem-loop structures in stalled mRNA molecules, and effect endonucleolytic cleavage of the mRNA. May play a role in the release non-functional ribosomes and degradation of damaged mRNAs. Has endoribonuclease activity. The sequence is that of Protein pelota homolog from Pyrococcus furiosus (strain ATCC 43587 / DSM 3638 / JCM 8422 / Vc1).